Reading from the N-terminus, the 593-residue chain is Arginine--tRNA ligase (593 aa).

The 'HIGH' region signature appears at A138–H148.

Belongs to the class-I aminoacyl-tRNA synthetase family. As to quaternary structure, monomer.

Its subcellular location is the cytoplasm. The catalysed reaction is tRNA(Arg) + L-arginine + ATP = L-arginyl-tRNA(Arg) + AMP + diphosphate. This chain is Arginine--tRNA ligase, found in Burkholderia vietnamiensis (strain G4 / LMG 22486) (Burkholderia cepacia (strain R1808)).